A 285-amino-acid polypeptide reads, in one-letter code: N(G),N(G)-dimethylarginine dimethylaminohydrolase 1 (285 aa).

Position 2 is an N-acetylalanine (Ala-2). Position 30 (Leu-30) interacts with substrate. A Phosphoserine modification is found at Ser-33. 5 residues coordinate substrate: Asp-73, Glu-78, Asp-79, Arg-98, and Arg-145. The Proton donor role is filled by His-173. Position 222 is an S-nitrosocysteine (Cys-222). Val-268 is a substrate binding site. Cys-274 bears the S-nitrosocysteine mark. Cys-274 acts as the Nucleophile in catalysis. Cys-274 lines the Zn(2+) pocket.

It belongs to the DDAH family. Monomer. Detected in red blood cells (at protein level). Widely distributed, high amounts found in kidney, brain, aorta and pancreas.

The enzyme catalyses N(omega),N(omega)-dimethyl-L-arginine + H2O = dimethylamine + L-citrulline. It carries out the reaction N(omega)-methyl-L-arginine + H2O = L-citrulline + methylamine. Its activity is regulated as follows. Inhibited by zinc ions. Functionally, hydrolyzes N(G),N(G)-dimethyl-L-arginine (ADMA) and N(G)-monomethyl-L-arginine (MMA) which act as inhibitors of NOS. Has therefore a role in the regulation of nitric oxide generation. In Rattus norvegicus (Rat), this protein is N(G),N(G)-dimethylarginine dimethylaminohydrolase 1 (Ddah1).